The chain runs to 284 residues: RNase adapter protein RapZ (284 aa).

An ATP-binding site is contributed by 8–15 (GRSGSGKS). 56–59 (DVRN) serves as a coordination point for GTP. The interval 266 to 284 (RSRGKNVQSRHRTLEKRKT) is RNA-binding.

Belongs to the RapZ-like family. RapZ subfamily. As to quaternary structure, homotrimer.

Modulates the synthesis of GlmS, by affecting the processing and stability of the regulatory small RNA GlmZ. When glucosamine-6-phosphate (GlcN6P) concentrations are high in the cell, RapZ binds GlmZ and targets it to cleavage by RNase E. Consequently, GlmZ is inactivated and unable to activate GlmS synthesis. Under low GlcN6P concentrations, RapZ is sequestered and inactivated by an other regulatory small RNA, GlmY, preventing GlmZ degradation and leading to synthesis of GlmS. This chain is RNase adapter protein RapZ, found in Salmonella arizonae (strain ATCC BAA-731 / CDC346-86 / RSK2980).